The following is a 156-amino-acid chain: Small ribosomal subunit protein uS7 (156 aa).

Belongs to the universal ribosomal protein uS7 family. As to quaternary structure, part of the 30S ribosomal subunit. Contacts proteins S9 and S11.

Functionally, one of the primary rRNA binding proteins, it binds directly to 16S rRNA where it nucleates assembly of the head domain of the 30S subunit. Is located at the subunit interface close to the decoding center, probably blocks exit of the E-site tRNA. The sequence is that of Small ribosomal subunit protein uS7 from Streptococcus pneumoniae (strain Taiwan19F-14).